A 439-amino-acid chain; its full sequence is Ribosomal protein uS12 methylthiotransferase RimO (439 aa).

Residues 5–115 (PKIGFVSLGC…LIEAVHTHAP (111 aa)) enclose the MTTase N-terminal domain. 6 residues coordinate [4Fe-4S] cluster: cysteine 14, cysteine 50, cysteine 79, cysteine 146, cysteine 150, and cysteine 153. The region spanning 132–369 (LTPRHYSYLK…MGLQAQISTD (238 aa)) is the Radical SAM core domain. In terms of domain architecture, TRAM spans 372 to 439 (QRFVGTEQQV…ESTEYDLIAD (68 aa)).

It belongs to the methylthiotransferase family. RimO subfamily. It depends on [4Fe-4S] cluster as a cofactor.

It localises to the cytoplasm. It carries out the reaction L-aspartate(89)-[ribosomal protein uS12]-hydrogen + (sulfur carrier)-SH + AH2 + 2 S-adenosyl-L-methionine = 3-methylsulfanyl-L-aspartate(89)-[ribosomal protein uS12]-hydrogen + (sulfur carrier)-H + 5'-deoxyadenosine + L-methionine + A + S-adenosyl-L-homocysteine + 2 H(+). Functionally, catalyzes the methylthiolation of an aspartic acid residue of ribosomal protein uS12. This is Ribosomal protein uS12 methylthiotransferase RimO from Francisella tularensis subsp. novicida (strain U112).